The following is a 160-amino-acid chain: 2-C-methyl-D-erythritol 2,4-cyclodiphosphate synthase (160 aa).

Aspartate 12 and histidine 14 together coordinate a divalent metal cation. 4-CDP-2-C-methyl-D-erythritol 2-phosphate-binding positions include 12–14 and 38–39; these read DVH and HS. Residue histidine 46 participates in a divalent metal cation binding. 4-CDP-2-C-methyl-D-erythritol 2-phosphate contacts are provided by residues 60–62, 65–69, 136–139, phenylalanine 143, and arginine 146; these read DIG, FPDTD, and TTTE.

This sequence belongs to the IspF family. As to quaternary structure, homotrimer. A divalent metal cation is required as a cofactor.

The catalysed reaction is 4-CDP-2-C-methyl-D-erythritol 2-phosphate = 2-C-methyl-D-erythritol 2,4-cyclic diphosphate + CMP. It participates in isoprenoid biosynthesis; isopentenyl diphosphate biosynthesis via DXP pathway; isopentenyl diphosphate from 1-deoxy-D-xylulose 5-phosphate: step 4/6. Involved in the biosynthesis of isopentenyl diphosphate (IPP) and dimethylallyl diphosphate (DMAPP), two major building blocks of isoprenoid compounds. Catalyzes the conversion of 4-diphosphocytidyl-2-C-methyl-D-erythritol 2-phosphate (CDP-ME2P) to 2-C-methyl-D-erythritol 2,4-cyclodiphosphate (ME-CPP) with a corresponding release of cytidine 5-monophosphate (CMP). The protein is 2-C-methyl-D-erythritol 2,4-cyclodiphosphate synthase of Acinetobacter baumannii (strain SDF).